The following is a 199-amino-acid chain: Elongation factor Ts, chloroplastic (199 aa).

It belongs to the EF-Ts family.

It is found in the plastid. The protein localises to the chloroplast. Associates with the EF-Tu.GDP complex and induces the exchange of GDP to GTP. It remains bound to the aminoacyl-tRNA.EF-Tu.GTP complex up to the GTP hydrolysis stage on the ribosome. This chain is Elongation factor Ts, chloroplastic (tsf), found in Galdieria sulphuraria (Red alga).